Reading from the N-terminus, the 626-residue chain is MADEGKSYSEHDDERVNFPQRKKKGRGPFRWKYGEGNRRSGRGGSGIRSSRLEEDDGDVAMSDAQDGPRVRYNPYTTRPNRRGDAWHDRDRIHVTVRRDRAPPERGGAGTSQDGTSKNWFKITIPYGRKYDKAWLLSMIQSKCSVPFTPIEFHYENTRAQFFVEDASTASALKAVNYKILDRENRRISIIINPSAPPHTILNELKPEQVEQLKLIMSKRYDGSQQALDLKGLRSDPDLVSQNIDVVLNRRSCMAATLRVIEENIPELLSLNLSHNRLYRLDDMSSIVQKVPNLKILNLSGNELKSERELDKIKGLKLEELWLDGNSLCDTFRDQSTYIRSVVACVSAIRERFPKLLRLDGHELPPPIAFDVEAPTTLPPCKGSYFGTENLKSLVLHFLQQYYAIYDSGDRQGLLDAYHDGACCSLSIPFIPQNPARSSLAEYFKDSRNVKKLKDPTLRFRLLKHTRLNVVAFLNELPKTQHDVNSFVVDISAQTSTLPCFSVNGVFKEVDGKSRDSLRAFTRTFIAVPASNSGLCIVNDELFVRNASSEEIQRAFAMPAPTPSSSPVPTLSPEQQEMLQAFSTQSGMNLEWSQKCLQDNNWDYTRSAQAFTHLKAKGEIPEVAFMK.

Residues 1–16 (MADEGKSYSEHDDERV) show a composition bias toward basic and acidic residues. The tract at residues 1-85 (MADEGKSYSE…TTRPNRRGDA (85 aa)) is disordered. A2 carries the post-translational modification N-acetylalanine. A minor non-specific RNA-binding region spans residues 2-60 (ADEGKSYSEHDDERVNFPQRKKKGRGPFRWKYGEGNRRSGRGGSGIRSSRLEEDDGDVA). The interval 2–118 (ADEGKSYSEH…GTSQDGTSKN (117 aa)) is RNA-binding (RBD). An interaction with ALYREF/THOC4 and LUZP4 region spans residues 2–198 (ADEGKSYSEH…IIINPSAPPH (197 aa)). Position 9 is a phosphoserine (S9). The span at 20-29 (QRKKKGRGPF) shows a compositional bias: basic residues. Residue R42 is modified to Asymmetric dimethylarginine; alternate. An Omega-N-methylarginine; alternate modification is found at R42. The interval 61-118 (MSDAQDGPRVRYNPYTTRPNRRGDAWHDRDRIHVTVRRDRAPPERGGAGTSQDGTSKN) is major non-specific RNA-binding. The segment at 61–118 (MSDAQDGPRVRYNPYTTRPNRRGDAWHDRDRIHVTVRRDRAPPERGGAGTSQDGTSKN) is RNA binding. Positions 67-100 (GPRVRYNPYTTRPNRRGDAWHDRDRIHVTVRRDR) match the Nuclear localization signal motif. The short motif at 83–110 (GDAWHDRDRIHVTVRRDRAPPERGGAGT) is the Nuclear export signal element. Residues 119–198 (WFKITIPYGR…IIINPSAPPH (80 aa)) form the RRM domain. Y126 bears the 3'-nitrotyrosine mark. LRR repeat units lie at residues 266-291 (ELLS…QKVP), 292-315 (NLKI…IKGL), 316-350 (KLEE…AIRE), and 351-378 (RFPK…TTLP). Residues 393–543 (LVLHFLQQYY…LCIVNDELFV (151 aa)) form the NTF2 domain. The TAP-C domain maps to 572-626 (PEQQEMLQAFSTQSGMNLEWSQKCLQDNNWDYTRSAQAFTHLKAKGEIPEVAFMK).

It belongs to the NXF family. In terms of assembly, heterodimer (via NTF2 domain) with NXT1. The formation of NXF1-NXT1 heterodimers is required for the NXF1-mediated nuclear mRNA export. Forms a complex with RANBP2/NUP358, NXT1 and RANGAP1. Associates with the exon junction complex (EJC) and with the transcription/export (TREX) complex. Found in a mRNA complex with UPF3A and UPF3B. Found in a post-splicing complex with RBM8A, UPF1, UPF2, UPF3A, UPF3B and RNPS1. Interacts (via N-terminus) with DHX9 (via N-terminus); this interaction is direct and negatively regulates NXF1-mediated nuclear export of constitutive transport element (CTE)-containing cellular mRNAs. Interacts with ALYREF/THOC4. Interacts with FYTTD1/UIF. Interacts with EIF4A3. Interacts with NUPL2. Interacts with THOC5. Interacts with CHTOP. Interacts with FRG1 (via N-terminus). Interacts with LUZP4. Interacts with FMR1; the interaction occurs in a mRNA-dependent and polyribosomes-independent manner in the nucleus. Interacts with CPSF6 (via N-terminus); this interaction is direct. Interacts with RBM15. Interacts with RBM15B. Interacts with MCM3AP; this interaction is not mediated by RNA.

The protein localises to the nucleus. It is found in the nucleoplasm. The protein resides in the nucleus speckle. Its subcellular location is the cytoplasm. Its function is as follows. Involved in the nuclear export of mRNA species bearing retroviral constitutive transport elements (CTE) and in the export of mRNA from the nucleus to the cytoplasm (TAP/NFX1 pathway). The NXF1-NXT1 heterodimer is involved in the export of HSP70 mRNA in conjunction with ALYREF/THOC4 and THOC5 components of the TREX complex. ALYREF/THOC4-bound mRNA is thought to be transferred to the NXF1-NXT1 heterodimer for export. Also involved in nuclear export of m6A-containing mRNAs: interaction between SRSF3 and YTHDC1 facilitates m6A-containing mRNA-binding to both SRSF3 and NXF1, promoting mRNA nuclear export. The polypeptide is Nuclear RNA export factor 1 (NXF1) (Pongo abelii (Sumatran orangutan)).